Here is a 326-residue protein sequence, read N- to C-terminus: Tetraacyldisaccharide 4'-kinase (326 aa).

ATP is bound at residue 55-62; the sequence is TVGGNGKT.

Belongs to the LpxK family.

It carries out the reaction a lipid A disaccharide + ATP = a lipid IVA + ADP + H(+). Its pathway is glycolipid biosynthesis; lipid IV(A) biosynthesis; lipid IV(A) from (3R)-3-hydroxytetradecanoyl-[acyl-carrier-protein] and UDP-N-acetyl-alpha-D-glucosamine: step 6/6. Transfers the gamma-phosphate of ATP to the 4'-position of a tetraacyldisaccharide 1-phosphate intermediate (termed DS-1-P) to form tetraacyldisaccharide 1,4'-bis-phosphate (lipid IVA). In Tolumonas auensis (strain DSM 9187 / NBRC 110442 / TA 4), this protein is Tetraacyldisaccharide 4'-kinase.